We begin with the raw amino-acid sequence, 93 residues long: uncharacterized protein (93 aa).

This is an uncharacterized protein from Rickettsia conorii (strain ATCC VR-613 / Malish 7).